A 234-amino-acid polypeptide reads, in one-letter code: tRNA (guanine-N(1)-)-methyltransferase (234 aa).

S-adenosyl-L-methionine-binding positions include glycine 115 and 135-140 (VGDYIL).

This sequence belongs to the RNA methyltransferase TrmD family. As to quaternary structure, homodimer.

The protein resides in the cytoplasm. It catalyses the reaction guanosine(37) in tRNA + S-adenosyl-L-methionine = N(1)-methylguanosine(37) in tRNA + S-adenosyl-L-homocysteine + H(+). In terms of biological role, specifically methylates guanosine-37 in various tRNAs. The chain is tRNA (guanine-N(1)-)-methyltransferase from Rickettsia africae (strain ESF-5).